The sequence spans 437 residues: CCA-adding enzyme (437 aa).

Residues S50 and K53 each coordinate ATP. Residues S50 and K53 each coordinate CTP. The Mg(2+) site is built by D61, D63, and D112. Positions 135, 155, and 164 each coordinate ATP. H135, K155, and Y164 together coordinate CTP.

This sequence belongs to the tRNA nucleotidyltransferase/poly(A) polymerase family. Archaeal CCA-adding enzyme subfamily. Homodimer. The cofactor is Mg(2+).

It carries out the reaction a tRNA precursor + 2 CTP + ATP = a tRNA with a 3' CCA end + 3 diphosphate. The catalysed reaction is a tRNA with a 3' CCA end + 2 CTP + ATP = a tRNA with a 3' CCACCA end + 3 diphosphate. In terms of biological role, catalyzes the addition and repair of the essential 3'-terminal CCA sequence in tRNAs without using a nucleic acid template. Adds these three nucleotides in the order of C, C, and A to the tRNA nucleotide-73, using CTP and ATP as substrates and producing inorganic pyrophosphate. tRNA 3'-terminal CCA addition is required both for tRNA processing and repair. Also involved in tRNA surveillance by mediating tandem CCA addition to generate a CCACCA at the 3' terminus of unstable tRNAs. While stable tRNAs receive only 3'-terminal CCA, unstable tRNAs are marked with CCACCA and rapidly degraded. The sequence is that of CCA-adding enzyme from Thermoplasma volcanium (strain ATCC 51530 / DSM 4299 / JCM 9571 / NBRC 15438 / GSS1).